Here is a 288-residue protein sequence, read N- to C-terminus: Protease HtpX (288 aa).

2 helical membrane passes run 4–24 (VMLF…VLNI) and 36–56 (LSGL…ISLM). Zn(2+) is bound at residue H143. E144 is a catalytic residue. H147 serves as a coordination point for Zn(2+). 2 consecutive transmembrane segments (helical) span residues 151–171 (GDMV…IFLS) and 193–213 (MVYF…ASFI). E222 contacts Zn(2+).

This sequence belongs to the peptidase M48B family. The cofactor is Zn(2+).

It is found in the cell inner membrane. In Vibrio vulnificus (strain YJ016), this protein is Protease HtpX.